Reading from the N-terminus, the 347-residue chain is Malate dehydrogenase, mitochondrial (347 aa).

Residues 1-27 constitute a mitochondrion transit peptide; it reads MKASILRSVRSAVSRSSSSNRLLSRSF. Residues 41 to 47 and aspartate 67 contribute to the NAD(+) site; that span reads GAAGGIG. Substrate is bound by residues arginine 114 and arginine 120. Residues asparagine 127 and 150 to 152 contribute to the NAD(+) site; that span reads ISN. Positions 152 and 186 each coordinate substrate. The active-site Proton acceptor is histidine 210. Residue methionine 261 coordinates NAD(+).

Belongs to the LDH/MDH superfamily. MDH type 1 family. In terms of assembly, homodimer.

It localises to the mitochondrion matrix. It catalyses the reaction (S)-malate + NAD(+) = oxaloacetate + NADH + H(+). The chain is Malate dehydrogenase, mitochondrial (MMDH) from Citrullus lanatus (Watermelon).